Here is a 176-residue protein sequence, read N- to C-terminus: ATP-dependent protease subunit HslV (176 aa).

The active site involves T5. Residues A161, C164, and T167 each contribute to the Na(+) site.

The protein belongs to the peptidase T1B family. HslV subfamily. In terms of assembly, a double ring-shaped homohexamer of HslV is capped on each side by a ring-shaped HslU homohexamer. The assembly of the HslU/HslV complex is dependent on binding of ATP.

Its subcellular location is the cytoplasm. It carries out the reaction ATP-dependent cleavage of peptide bonds with broad specificity.. With respect to regulation, allosterically activated by HslU binding. In terms of biological role, protease subunit of a proteasome-like degradation complex believed to be a general protein degrading machinery. The chain is ATP-dependent protease subunit HslV from Caldicellulosiruptor saccharolyticus (strain ATCC 43494 / DSM 8903 / Tp8T 6331).